We begin with the raw amino-acid sequence, 175 residues long: Peptide deformylase (175 aa).

Fe cation is bound by residues C96 and H138. Residue E139 is part of the active site. H142 lines the Fe cation pocket.

The protein belongs to the polypeptide deformylase family. Fe(2+) is required as a cofactor.

It catalyses the reaction N-terminal N-formyl-L-methionyl-[peptide] + H2O = N-terminal L-methionyl-[peptide] + formate. In terms of biological role, removes the formyl group from the N-terminal Met of newly synthesized proteins. Requires at least a dipeptide for an efficient rate of reaction. N-terminal L-methionine is a prerequisite for activity but the enzyme has broad specificity at other positions. The protein is Peptide deformylase of Rhodopseudomonas palustris (strain BisB5).